The sequence spans 201 residues: Hydroxymethylphosphonate dioxygenase (201 aa).

Fe cation-binding residues include His47, His71, Asp72, His94, His117, and Asp174.

Fe(2+) serves as cofactor.

It carries out the reaction hydroxymethylphosphonate + O2 = formate + phosphate + 2 H(+). It catalyses the reaction (1R)-(2-amino-1-hydroxyethyl)phosphonate + O2 = glycine + phosphate + 2 H(+). The enzyme catalyses (1R)-(1-hydroxyethyl)phosphonate + O2 = acetate + phosphate + 2 H(+). Part of an oxidative pathway for utilization of methylphosphonic acid as a phosphate source. Catalyzes the oxidation of hydroxymethylphosphonic acid to produce formate and phosphate. Can also use (1R)-(2-amino-1-hydroxyethyl)phosphonic acid and (R)-1-hydroxyethylphosphonic acid with similar catalytic efficiency. In Gimesia maris (strain ATCC 29201 / DSM 8797 / 534-30) (Planctomyces maris), this protein is Hydroxymethylphosphonate dioxygenase.